A 478-amino-acid polypeptide reads, in one-letter code: 2,5-dioxopentanoate dehydrogenase (478 aa).

Residues 148–149 (WN), 172–175 (KPAT), and 225–226 (GS) each bind NADP(+). The active-site Proton acceptor is the glutamate 249. Catalysis depends on cysteine 283, which acts as the Nucleophile. Glutamate 379 is an NADP(+) binding site.

This sequence belongs to the aldehyde dehydrogenase family. In terms of assembly, homotetramer.

It carries out the reaction 2,5-dioxopentanoate + NADP(+) + H2O = 2-oxoglutarate + NADPH + 2 H(+). In terms of biological role, 2,5-dioxopentanoate dehydrogenase involved in the degradation of pentoses such as D-arabinose or D-xylose, a major component of hemicelluloses such as xylan. Catalyzes the fifth reaction in the pentose utilization pathway through dehydratation of 2,5-dioxopentanoate into 2-oxoglutarate. Also shows dehydrogenase activity toward glycolaldehyde and DL-glyceraldehyde. This Saccharolobus solfataricus (strain ATCC 35092 / DSM 1617 / JCM 11322 / P2) (Sulfolobus solfataricus) protein is 2,5-dioxopentanoate dehydrogenase.